The chain runs to 709 residues: SH3 domain-containing kinase-binding protein 1 (709 aa).

SH3 domains are found at residues 1–58 (MVEA…EIKK) and 98–157 (RRRR…ELSG). Phosphoserine is present on residues serine 156, serine 159, serine 227, and serine 274. A compositionally biased stretch (low complexity) spans 221 to 239 (ETTGSESDGGDSSSTKSEG). The interval 221 to 242 (ETTGSESDGGDSSSTKSEGANG) is disordered. Disordered regions lie at residues 289 to 309 (GKKLPPATSTPDPSKTEMDSR), 372 to 485 (SDFD…KIDL), and 511 to 650 (DSVI…VSSQ). A Phosphothreonine modification is found at threonine 298. In terms of domain architecture, SH3 3 spans 311–372 (KTKDYCKVIF…PDNFVKLLPS (62 aa)). Residues 399–434 (TERKHEIKKIPPERPETLPNRTEEKERPEREPKLDL) show a composition bias toward basic and acidic residues. Serine 480 bears the Phosphoserine mark. Residues 513 to 528 (VISSTEKLSHPTTSRP) show a composition bias toward polar residues. Low complexity predominate over residues 535-554 (PPSQSLTSSSLSSPDIFDSP). Phosphoserine is present on residues serine 553, serine 555, and serine 565. Basic and acidic residues predominate over residues 561 to 575 (EEHISLAHRGIDVSK). The span at 579-592 (KTVTISQVSDNKTS) shows a compositional bias: polar residues. Residues 600 to 623 (MAAASSGPASLSSVASSPMSSSLG) are compositionally biased toward low complexity. The span at 627–636 (QRASSPSLFS) shows a compositional bias: polar residues. The residue at position 631 (serine 631) is a Phosphoserine. The stretch at 646–708 (AVSSQAAIEE…VNDIKKALQS (63 aa)) forms a coiled coil.

Can self-associate and form homotetramers. Interacts with CD2, F-actin capping protein, PIK3R3, GRB2, EGFR, MET, BLNK, MAP3K4, PDCD6IP, SPRY2, ARHGAP17, ARHGAP27, CRK, BCAR1, SOS1, ASAP1, ARAP3, HIP1R, SYNJ2, INPP5D and STAP1. Interacts with E3 ubiquitin-protein ligase CBL. Interacts with CBLB, but does not interact with CBLC. Two molecules of SH3KBP1 seem to bind through their respective SH3 1 domain to one molecule of CBLB. The interaction with CBL or CBLB and EGFR is increased upon EGF stimulation. The interaction with CBL is attenuated by PDCD6IP. Interacts (via SH3 domains) with ARAP1. The interaction is independent of EGF and does not affect ARAP1 GTPase-activating activity but is involved in regulating ubiquitination and endocytic trafficking of EGFR. ARAP1 competes with CBL for binding to SH3KBP1 and prevents interaction of CBL with SH3KBP1; this is likely to regulate SH3KBP1-mediated internalization of EGFR. Interacts through its proline-rich region with the SH3 domain of endophilins SH3GL1, SH3GL2 and SH3GL3. The SH3KBP1-endophilin complex seems to associate with a complex containing the phosphorylated receptor (EGFR or MET) and phosphorylated CBL. Probably associates with ASAP1 and phosphorylated EGFR. Probably part of a complex consisting of at least SH3KBP1, ASAP1 and ARAP3. Interacts with focal adhesion kinases PTK2/FAK1 and PTK2B/PYK2, probably as a dimer. Interacts with DAB2 and probably associates with chathrin through its interaction with DAB2. Part of a complex consisting of SH3KBP1, DAB2, and clathrin heavy chain. DAB2 and clathrin dissociate from SH3KBP1 following growth factor treatment, enabling interaction with CBL. Interacts with DDN and probably associates with MAGI2 through its interaction with DDN. Interacts with the SH3 domains of SRC tyrosine-protein kinases SRC, LCK, LYN, FGR, FYN and HCK. Interacts with TRADD, BIRC2, TRAF1, TRAF2 and TNFR1, and the association with a TNFR1-associated complex upon stimulation with TNF-alpha seems to be mediated by SRC. Probably part of a complex consisting of at least SH3KBP1, ASAP1 and ARAP3. Interacts (via SH3 domains) with SHKBP1 (via PXXXPR motifs). Interacts with ATX2. Interaction with CBL is abolished in the presence of SHKBP1. Interacts (via SH3 domains) with ZFP36 (via extreme C-terminal region). Interacts with MAP3K4; this interaction enhances the association with ZFP36. Post-translationally, monoubiquitinated by CBL and CBLB after EGF stimulation; probably on its C-terminus.

It localises to the cytoplasm. Its subcellular location is the cytoskeleton. The protein localises to the cytoplasmic vesicle membrane. The protein resides in the synapse. It is found in the synaptosome. It localises to the cell junction. Its subcellular location is the focal adhesion. Adapter protein involved in regulating diverse signal transduction pathways. Involved in the regulation of endocytosis and lysosomal degradation of ligand-induced receptor tyrosine kinases, including EGFR and MET/hepatocyte growth factor receptor, through an association with CBL and endophilins. The association with CBL, and thus the receptor internalization, may be inhibited by an interaction with PDCD6IP and/or SPRY2. Involved in regulation of ligand-dependent endocytosis of the IgE receptor. Attenuates phosphatidylinositol 3-kinase activity by interaction with its regulatory subunit. May be involved in regulation of cell adhesion; promotes the interaction between TTK2B and PDCD6IP. May be involved in the regulation of cellular stress response via the MAPK pathways through its interaction with MAP3K4. Is involved in modulation of tumor necrosis factor mediated apoptosis. Plays a role in the regulation of cell morphology and cytoskeletal organization. Required in the control of cell shape and migration. Has an essential role in the stimulation of B cell activation. The polypeptide is SH3 domain-containing kinase-binding protein 1 (Sh3kbp1) (Mus musculus (Mouse)).